Here is an 87-residue protein sequence, read N- to C-terminus: Small ribosomal subunit protein bS20 (87 aa).

The interval 1 to 22 (MANHKSALKRHKQSLKRAARNR) is disordered.

Belongs to the bacterial ribosomal protein bS20 family.

Its function is as follows. Binds directly to 16S ribosomal RNA. The polypeptide is Small ribosomal subunit protein bS20 (Nitratidesulfovibrio vulgaris (strain DP4) (Desulfovibrio vulgaris)).